An 86-amino-acid chain; its full sequence is Toxin Tpa4 (86 aa).

The N-terminal stretch at 1–19 (MNYFVLIAVACLLTAGTES) is a signal peptide. In terms of domain architecture, LCN-type CS-alpha/beta spans 21–82 (KDGYPLEYDN…EPIKTSGRCR (62 aa)). 4 disulfide bridges follow: cysteine 31–cysteine 81, cysteine 35–cysteine 57, cysteine 43–cysteine 64, and cysteine 47–cysteine 66. Proline 83 bears the Proline amide mark.

It belongs to the long (4 C-C) scorpion toxin superfamily. Sodium channel inhibitor family. Alpha subfamily. As to expression, expressed by the venom gland.

Its subcellular location is the secreted. In terms of biological role, alpha toxins bind voltage-independently at site-3 of sodium channels (Nav) and inhibit the inactivation of the activated channels, thereby blocking neuronal transmission. The polypeptide is Toxin Tpa4 (Tityus pachyurus (Colombian scorpion)).